The chain runs to 1393 residues: DNA-directed RNA polymerase subunit beta' (1393 aa).

4 residues coordinate Zn(2+): Cys72, Cys74, Cys87, and Cys90. Mg(2+)-binding residues include Asp463, Asp465, and Asp467. Positions 812, 887, 894, and 897 each coordinate Zn(2+).

It belongs to the RNA polymerase beta' chain family. The RNAP catalytic core consists of 2 alpha, 1 beta, 1 beta' and 1 omega subunit. When a sigma factor is associated with the core the holoenzyme is formed, which can initiate transcription. Mg(2+) serves as cofactor. Requires Zn(2+) as cofactor.

It catalyses the reaction RNA(n) + a ribonucleoside 5'-triphosphate = RNA(n+1) + diphosphate. Functionally, DNA-dependent RNA polymerase catalyzes the transcription of DNA into RNA using the four ribonucleoside triphosphates as substrates. The polypeptide is DNA-directed RNA polymerase subunit beta' (Chlamydia abortus (strain DSM 27085 / S26/3) (Chlamydophila abortus)).